A 173-amino-acid polypeptide reads, in one-letter code: Ribulose bisphosphate carboxylase small subunit, chloroplastic 1 (173 aa).

The N-terminal 49 residues, 1 to 49 (MASIPATVATVAQANMVAPFTGLKANAAFPVTKKVNDFSTLPSNGGRVQ), are a transit peptide targeting the chloroplast.

Belongs to the RuBisCO small chain family. Heterohexadecamer of 8 large and 8 small subunits.

The protein resides in the plastid. It is found in the chloroplast. In terms of biological role, ruBisCO catalyzes two reactions: the carboxylation of D-ribulose 1,5-bisphosphate, the primary event in carbon dioxide fixation, as well as the oxidative fragmentation of the pentose substrate. Both reactions occur simultaneously and in competition at the same active site. Although the small subunit is not catalytic it is essential for maximal activity. This Flaveria pringlei protein is Ribulose bisphosphate carboxylase small subunit, chloroplastic 1.